The primary structure comprises 1225 residues: NHS-like protein 2 (1225 aa).

Disordered stretches follow at residues 161-180 (TFRSSDEATKPTPNPRPQSA), 193-213 (QLSEDETTTQGVRAPEASLSL), 291-371 (NFSQ…ESMG), 466-510 (HMPE…TTDV), 543-632 (LSAQ…PEST), 670-766 (QGSS…KFPK), 812-1009 (KTNP…KKPS), 1042-1093 (DTKC…DKTA), and 1128-1203 (KEPG…KTTN). 2 stretches are compositionally biased toward polar residues: residues 291–315 (NFSQRDQGHSNSPAGSVAHSTTSDI) and 339–350 (SLTSPVLRTPSS). At serine 500 the chain carries Phosphoserine. A compositionally biased stretch (basic residues) spans 552–568 (RRQRSKSISLRKAKKKP). Residue serine 576 is modified to Phosphoserine. Low complexity predominate over residues 675 to 688 (SLASPSTSRATTPS). Serine 691 carries the post-translational modification Phosphoserine. Polar residues-rich tracts occupy residues 710 to 730 (SPSSGYSSQSETPTPTVSMSL) and 812 to 827 (KTNPNQPIMPMVTQSD). Residues 841–851 (PEDDIESPEYA) show a composition bias toward acidic residues. A compositionally biased stretch (basic and acidic residues) spans 852–867 (EEPRAEEVFTLPERKT). Composition is skewed to polar residues over residues 939–968 (GESTAPSSLVFTPFASSSDAFFSGTQQPPQ) and 1054–1065 (SLGQRVTSTPQA). Serine 1054 is subject to Phosphoserine. Over residues 1082–1093 (TEEKSLISDKTA) the composition is skewed to basic and acidic residues. A compositionally biased stretch (polar residues) spans 1138–1155 (RTSSHSPIKNTAESPISE). Positions 1156–1166 (STATAGSGSSA) are enriched in low complexity.

Belongs to the NHS family.

This is NHS-like protein 2 from Homo sapiens (Human).